Here is a 261-residue protein sequence, read N- to C-terminus: Na(+)-translocating NADH-quinone reductase subunit C (261 aa).

A helical transmembrane segment spans residues 12–32; the sequence is LGVVIGLSLVCSIIVSTAAVG. Position 229 is an FMN phosphoryl threonine (Thr-229).

The protein belongs to the NqrC family. As to quaternary structure, composed of six subunits; NqrA, NqrB, NqrC, NqrD, NqrE and NqrF. It depends on FMN as a cofactor.

It is found in the cell inner membrane. The enzyme catalyses a ubiquinone + n Na(+)(in) + NADH + H(+) = a ubiquinol + n Na(+)(out) + NAD(+). NQR complex catalyzes the reduction of ubiquinone-1 to ubiquinol by two successive reactions, coupled with the transport of Na(+) ions from the cytoplasm to the periplasm. NqrA to NqrE are probably involved in the second step, the conversion of ubisemiquinone to ubiquinol. This is Na(+)-translocating NADH-quinone reductase subunit C from Vibrio parahaemolyticus serotype O3:K6 (strain RIMD 2210633).